Here is a 293-residue protein sequence, read N- to C-terminus: 33 kDa chaperonin (293 aa).

Intrachain disulfides connect cysteine 237/cysteine 239 and cysteine 271/cysteine 274.

The protein belongs to the HSP33 family. Under oxidizing conditions two disulfide bonds are formed involving the reactive cysteines. Under reducing conditions zinc is bound to the reactive cysteines and the protein is inactive.

The protein resides in the cytoplasm. Functionally, redox regulated molecular chaperone. Protects both thermally unfolding and oxidatively damaged proteins from irreversible aggregation. Plays an important role in the bacterial defense system toward oxidative stress. The polypeptide is 33 kDa chaperonin (Haemophilus influenzae (strain ATCC 51907 / DSM 11121 / KW20 / Rd)).